We begin with the raw amino-acid sequence, 131 residues long: Profilin-1 (131 aa).

It belongs to the profilin family. As to quaternary structure, occurs in many kinds of cells as a complex with monomeric actin in a 1:1 ratio.

Its subcellular location is the cytoplasm. It localises to the cytoskeleton. Its function is as follows. Binds to actin and affects the structure of the cytoskeleton. At high concentrations, profilin prevents the polymerization of actin, whereas it enhances it at low concentrations. By binding to PIP2, it inhibits the formation of IP3 and DG. The chain is Profilin-1 from Ambrosia artemisiifolia (Common ragweed).